The sequence spans 372 residues: Germination protease (372 aa).

Residues 1–15 constitute a propeptide that is removed on maturation; that stretch reads MNRSIDLSMYSVRTD.

This sequence belongs to the peptidase A25 family. In terms of assembly, homotetramer. In terms of processing, autoproteolytically processed. The inactive tetrameric zymogen termed p46 autoprocesses to a smaller form termed p41, which is active only during spore germination.

It carries out the reaction Endopeptidase action with P4 Glu or Asp, P1 preferably Glu &gt; Asp, P1' hydrophobic and P2' Ala.. Its function is as follows. Initiates the rapid degradation of small, acid-soluble proteins during spore germination. The sequence is that of Germination protease from Geobacillus sp. (strain WCH70).